Reading from the N-terminus, the 155-residue chain is Transcriptional repressor NrdR (155 aa).

A zinc finger spans residues 3–34; sequence CPFCGNIDTQVKDSRPAEDHVSIRRRRFCPAC. The ATP-cone domain maps to 49–139; the sequence is LVVIKSTGKR…VYKNFQAADD (91 aa).

It belongs to the NrdR family. It depends on Zn(2+) as a cofactor.

Functionally, negatively regulates transcription of bacterial ribonucleotide reductase nrd genes and operons by binding to NrdR-boxes. The polypeptide is Transcriptional repressor NrdR (Roseobacter denitrificans (strain ATCC 33942 / OCh 114) (Erythrobacter sp. (strain OCh 114))).